We begin with the raw amino-acid sequence, 352 residues long: N-acetyl-gamma-glutamyl-phosphate reductase (352 aa).

Cysteine 155 is an active-site residue.

It belongs to the NAGSA dehydrogenase family. Type 1 subfamily.

The protein resides in the cytoplasm. The catalysed reaction is N-acetyl-L-glutamate 5-semialdehyde + phosphate + NADP(+) = N-acetyl-L-glutamyl 5-phosphate + NADPH + H(+). Its pathway is amino-acid biosynthesis; L-arginine biosynthesis; N(2)-acetyl-L-ornithine from L-glutamate: step 3/4. Its function is as follows. Catalyzes the NADPH-dependent reduction of N-acetyl-5-glutamyl phosphate to yield N-acetyl-L-glutamate 5-semialdehyde. In Brachyspira hyodysenteriae (strain ATCC 49526 / WA1), this protein is N-acetyl-gamma-glutamyl-phosphate reductase.